The following is a 232-amino-acid chain: GTP cyclohydrolase 1 (232 aa).

Positions 1–24 (MSDNLKSYQDNHIENEDEEIYERS) are disordered. Residues Cys121, His124, and Cys192 each coordinate Zn(2+).

Belongs to the GTP cyclohydrolase I family. In terms of assembly, toroid-shaped homodecamer, composed of two pentamers of five dimers.

It catalyses the reaction GTP + H2O = 7,8-dihydroneopterin 3'-triphosphate + formate + H(+). It functions in the pathway cofactor biosynthesis; 7,8-dihydroneopterin triphosphate biosynthesis; 7,8-dihydroneopterin triphosphate from GTP: step 1/1. In terms of biological role, first enzyme in the biosynthesis of tetrahydrobiopterin (BH4). Catalyzes the conversion of GTP into dihydroneopterin triphosphate (7,8-dihydroneopterin 3'-triphosphate), which is subsequently catalyzed by 6-pyruvoyltetrahydropterin synthase (ptsA) and sepiapterin reductase (sprA). This Dictyostelium discoideum (Social amoeba) protein is GTP cyclohydrolase 1 (gchA).